A 202-amino-acid chain; its full sequence is Securin-2 (202 aa).

The tract at residues 60–105 (TRKALGTVNRATEKSVKTNGPRKQKQPSFSAKKMTEKTVKTKSSVP) is disordered. The short motif at 61-64 (RKAL) is the D-box element. Positions 163-173 (PPSPVKMPSPP) match the SH3-binding motif.

This sequence belongs to the securin family. In terms of tissue distribution, expressed at low levels in the pituitary, liver, spleen, prostate, testis, ovary, small intestine and colon. Also expressed in various pituitary, testicular, liver and ovarian tumors.

The protein resides in the cytoplasm. Its subcellular location is the nucleus. The protein is Securin-2 (PTTG2) of Homo sapiens (Human).